A 331-amino-acid polypeptide reads, in one-letter code: Cytosolic arginine sensor for mTORC1 subunit 1 (331 aa).

S14 carries the post-translational modification Phosphoserine. ACT domains are found at residues 72 to 137 (AEAT…HTLA) and 259 to 320 (GELW…DILQ). L-arginine contacts are provided by residues 110-111 (SV), G273, 279-280 (IV), and 299-303 (TFNFD).

Belongs to the GATS family. As to quaternary structure, forms homodimers and heterodimers with CASTOR2. Interacts with the GATOR2 complex which is composed of MIOS, SEC13, SEH1L, WDR24 and WDR59; the interaction is negatively regulated by arginine. Interacts with TM4SF5; the interaction is positively regulated by leucine and is negatively regulated by arginine. Post-translationally, phosphorylation at Ser-14 by AKT1, promoting the interaction between CASTOR1 and RNF167. Ubiquitinated by RNF167 via 'Lys-29'-polyubiquitination, leading to its degradation, releasing the GATOR2 complex. Ubiquitination by RNF167 is promoted by phosphorylation at Ser-14 by AKT1.

The protein resides in the cytoplasm. It localises to the cytosol. Its function is as follows. Functions as an intracellular arginine sensor within the amino acid-sensing branch of the TORC1 signaling pathway. As a homodimer or a heterodimer with CASTOR2, binds and inhibits the GATOR subcomplex GATOR2 and thereby mTORC1. Binding of arginine to CASTOR1 allosterically disrupts the interaction of CASTOR1-containing dimers with GATOR2 which can in turn activate mTORC1 and the TORC1 signaling pathway. In Mus musculus (Mouse), this protein is Cytosolic arginine sensor for mTORC1 subunit 1.